Reading from the N-terminus, the 497-residue chain is Ammonium transporter 1 (497 aa).

Over 1–32 the chain is Extracellular; it reads MSSTTDATPTPSGVNGGDSMTVNLNQFYNNGD. A helical membrane pass occupies residues 33 to 53; it reads VAWILTSTALVFIMIPGVGFF. Topologically, residues 54 to 63 are cytoplasmic; it reads YSGLARRRSA. A helical membrane pass occupies residues 64-84; that stretch reads ISMLFLSMMSVAIVAFQWFFW. The Extracellular portion of the chain corresponds to 85 to 122; that stretch reads GYSLTFSHEGGPYIGSLANFGLRQTLGRPSSGASSVPD. A helical transmembrane segment spans residues 123 to 143; that stretch reads ILFCVFQGMFAAITPALAIGA. Residues 144–150 are Cytoplasmic-facing; sequence AADRGRM. A helical membrane pass occupies residues 151–171; it reads FPCMVFMFLWTSIVYDPIAFW. The Extracellular portion of the chain corresponds to 172–187; that stretch reads TWNPNGWLNKLGSYDF. The helical transmembrane segment at 188–208 threads the bilayer; the sequence is AGGSPVHISSGMAALAYSIVI. Residues 209 to 223 are Cytoplasmic-facing; it reads GKRCDHGTTKYRPHN. Residues 224–244 form a helical membrane-spanning segment; the sequence is VPHVVLGTVFLWFGWFGFNGG. At 245-253 the chain is on the extracellular side; sequence SSAAANMRG. Residues 254–274 traverse the membrane as a helical segment; sequence VMAVVVTHLAASVGGIVWCVI. At 275–281 the chain is on the cytoplasmic side; it reads DFAKNRH. The helical transmembrane segment at 282-302 threads the bilayer; it reads WSVVGFCEGAVAGLVAITPGS. Residue G303 is a topological domain, extracellular. A helical transmembrane segment spans residues 304-324; the sequence is FVPPWAAVVIGALGAVFCYAA. Over 325–338 the chain is Cytoplasmic; that stretch reads TYLKKIIRVDDALD. Residues 339–359 form a helical membrane-spanning segment; the sequence is IFAEHGVGGMVGNILTALFAA. Over 360-394 the chain is Extracellular; the sequence is DYIEALDGSGTAYTGGWITHHYIQLGYQLADTVSC. Residues 395–415 traverse the membrane as a helical segment; the sequence is AAYSFAVSCALLFVMNYIPGL. At 416–497 the chain is on the cytoplasmic side; the sequence is SLRVSREDEV…AESEAQAPAI (82 aa). Residues 440 to 497 are disordered; it reads YKDSTDEPPPITTSGVQYTSPTVSDSASNEKEQEHRAQNEAQKEEEYRAESEAQAPAI. Residues 451-466 are compositionally biased toward polar residues; it reads TTSGVQYTSPTVSDSA. The span at 467-490 shows a compositional bias: basic and acidic residues; that stretch reads SNEKEQEHRAQNEAQKEEEYRAES.

The protein belongs to the ammonia transporter channel (TC 1.A.11.2) family.

The protein localises to the membrane. Transporter for ammonium to use as a nitrogen source. Under ammonium limitation acts as an ammonium sensor, generating a signal that leads to pseudohyphal growth. The sequence is that of Ammonium transporter 1 (amt1) from Schizosaccharomyces pombe (strain 972 / ATCC 24843) (Fission yeast).